We begin with the raw amino-acid sequence, 449 residues long: MRKRKIMLNVIDLRGHVPTTSELRRTLPRGGTDINSVLPIVEPVVTDVKNRGAAAALDYGEKFDHVRPTSIRVPQDVIDQALDSLDPNVIEALKESIARVRAVHSEQLPAQHTTSFGEGATITEKFIPVSRVGLYAPGGNAVYPSSVIMNVVPAQEAGVESLVVASPPQKDHGGWPHPTILAAAKLLGVTEVWAMGGAQAVALLAYGDDTQQNSAEVLEPVDMITGPGNIFVTAAKRLVRGVVGIDSEAGPTEIAIVADAQANPVWIAYDLISQAEHDVLAASVLITDSEELAQRVNEEVAARYSVTRNADRVSEALKGQQSGIVLVDDLPTAVIVADAYAAEHLEIHTAESHKVAEQIRNAGAIFVGGYSPVPLGDYSAGSNHVLPTSGSARYSSGLSTHTFLKPVNVIYYDEVALKEISDTVITLADAEDLPAHGEAIRTRFENLGN.

The NAD(+) site is built by tyrosine 135, glutamine 199, and asparagine 229. Substrate-binding residues include threonine 252, glutamine 274, and histidine 277. 2 residues coordinate Zn(2+): glutamine 274 and histidine 277. Residues glutamate 343 and histidine 344 each act as proton acceptor in the active site. Substrate-binding residues include histidine 344, aspartate 377, glutamate 431, and histidine 436. Position 377 (aspartate 377) interacts with Zn(2+). Histidine 436 lines the Zn(2+) pocket.

This sequence belongs to the histidinol dehydrogenase family. Requires Zn(2+) as cofactor.

The enzyme catalyses L-histidinol + 2 NAD(+) + H2O = L-histidine + 2 NADH + 3 H(+). It participates in amino-acid biosynthesis; L-histidine biosynthesis; L-histidine from 5-phospho-alpha-D-ribose 1-diphosphate: step 9/9. Functionally, catalyzes the sequential NAD-dependent oxidations of L-histidinol to L-histidinaldehyde and then to L-histidine. In Corynebacterium diphtheriae (strain ATCC 700971 / NCTC 13129 / Biotype gravis), this protein is Histidinol dehydrogenase.